A 35-amino-acid polypeptide reads, in one-letter code: Photosystem II reaction center protein T (35 aa).

A helical transmembrane segment spans residues 3 to 23 (ALVYTFLLVSTLGIIFFAIFF).

It belongs to the PsbT family. PSII is composed of 1 copy each of membrane proteins PsbA, PsbB, PsbC, PsbD, PsbE, PsbF, PsbH, PsbI, PsbJ, PsbK, PsbL, PsbM, PsbT, PsbY, PsbZ, Psb30/Ycf12, at least 3 peripheral proteins of the oxygen-evolving complex and a large number of cofactors. It forms dimeric complexes.

The protein resides in the plastid. It is found in the chloroplast thylakoid membrane. Functionally, found at the monomer-monomer interface of the photosystem II (PS II) dimer, plays a role in assembly and dimerization of PSII. PSII is a light-driven water plastoquinone oxidoreductase, using light energy to abstract electrons from H(2)O, generating a proton gradient subsequently used for ATP formation. The chain is Photosystem II reaction center protein T from Suaeda aralocaspica (Seablite).